A 138-amino-acid chain; its full sequence is Ribosome-binding factor A (138 aa).

This sequence belongs to the RbfA family. In terms of assembly, monomer. Binds 30S ribosomal subunits, but not 50S ribosomal subunits or 70S ribosomes.

Its subcellular location is the cytoplasm. Its function is as follows. One of several proteins that assist in the late maturation steps of the functional core of the 30S ribosomal subunit. Associates with free 30S ribosomal subunits (but not with 30S subunits that are part of 70S ribosomes or polysomes). Required for efficient processing of 16S rRNA. May interact with the 5'-terminal helix region of 16S rRNA. This Bradyrhizobium sp. (strain ORS 278) protein is Ribosome-binding factor A.